The chain runs to 57 residues: Lantibiotic nisin-A (57 aa).

A propeptide spanning residues 1–23 is cleaved from the precursor; that stretch reads MSTKDFNLDLVSVSKKDSGASPR. Residue Thr-25 is modified to (Z)-2,3-didehydrobutyrine. A cross-link (lanthionine (Ser-Cys)) is located at residues 26–30; sequence SISLC. Ser-28 is subject to 2,3-didehydroalanine (Ser). Cross-links (beta-methyllanthionine (Thr-Cys)) lie at residues 31–34, 36–42, 46–49, and 48–51; these read TPGC, TGALMGC, TATC, and TCHC. Residue Ser-56 is modified to 2,3-didehydroalanine (Ser).

This sequence belongs to the type A lantibiotic family. Post-translationally, maturation of lantibiotics involves the enzymatic conversion of Thr, and Ser into dehydrated AA and the formation of thioether bonds with cysteine. This is followed by membrane translocation and cleavage of the modified precursor. In terms of processing, the structure of the 2,3-didehydrobutyrine is not discussed in PubMed:8454055. However, in Fig. 1 the residue is diagrammed as the Z-isomer.

Lanthionine-containing peptide antibiotic (lantibiotic) active on Gram-positive bacteria. The bactericidal activity of lantibiotics is based on depolarization of energized bacterial cytoplasmic membranes, initiated by the formation of aqueous transmembrane pores. This is Lantibiotic nisin-A (spaN) from Lactococcus lactis subsp. lactis (Streptococcus lactis).